Consider the following 180-residue polypeptide: Translation initiation factor IF-3 (180 aa).

The protein belongs to the IF-3 family. Monomer.

It localises to the cytoplasm. IF-3 binds to the 30S ribosomal subunit and shifts the equilibrium between 70S ribosomes and their 50S and 30S subunits in favor of the free subunits, thus enhancing the availability of 30S subunits on which protein synthesis initiation begins. This Salmonella typhimurium (strain LT2 / SGSC1412 / ATCC 700720) protein is Translation initiation factor IF-3.